We begin with the raw amino-acid sequence, 115 residues long: Putative HNH nuclease YajD (115 aa).

Residues 27-75 enclose the HNH domain; the sequence is CGRCSREFVYSNLRELTVHHIDHDHTNNPEDGSNWELLCLYCHDHEHSK.

Belongs to the HNH nuclease family.

This chain is Putative HNH nuclease YajD (yajD), found in Salmonella typhi.